We begin with the raw amino-acid sequence, 125 residues long: Small ribosomal subunit protein uS12 (125 aa).

3-methylthioaspartic acid is present on D89.

The protein belongs to the universal ribosomal protein uS12 family. Part of the 30S ribosomal subunit. Contacts proteins S8 and S17. May interact with IF1 in the 30S initiation complex.

In terms of biological role, with S4 and S5 plays an important role in translational accuracy. Functionally, interacts with and stabilizes bases of the 16S rRNA that are involved in tRNA selection in the A site and with the mRNA backbone. Located at the interface of the 30S and 50S subunits, it traverses the body of the 30S subunit contacting proteins on the other side and probably holding the rRNA structure together. The combined cluster of proteins S8, S12 and S17 appears to hold together the shoulder and platform of the 30S subunit. The sequence is that of Small ribosomal subunit protein uS12 from Cupriavidus necator (strain ATCC 17699 / DSM 428 / KCTC 22496 / NCIMB 10442 / H16 / Stanier 337) (Ralstonia eutropha).